A 364-amino-acid chain; its full sequence is Mannose-1-phosphate guanyltransferase (364 aa).

This sequence belongs to the transferase hexapeptide repeat family.

The protein resides in the cytoplasm. The enzyme catalyses alpha-D-mannose 1-phosphate + GTP + H(+) = GDP-alpha-D-mannose + diphosphate. The protein operates within nucleotide-sugar biosynthesis; GDP-alpha-D-mannose biosynthesis; GDP-alpha-D-mannose from alpha-D-mannose 1-phosphate (GTP route): step 1/1. Functionally, involved in cell wall synthesis where it is required for glycosylation. Involved in cell cycle progression through cell-size checkpoint. This Neurospora crassa (strain ATCC 24698 / 74-OR23-1A / CBS 708.71 / DSM 1257 / FGSC 987) protein is Mannose-1-phosphate guanyltransferase (mpg-1).